Here is a 152-residue protein sequence, read N- to C-terminus: Ribosomal RNA large subunit methyltransferase H (152 aa).

Residues L69, G96, and 118–123 (FGKLTF) each bind S-adenosyl-L-methionine.

The protein belongs to the RNA methyltransferase RlmH family. Homodimer.

It localises to the cytoplasm. The enzyme catalyses pseudouridine(1915) in 23S rRNA + S-adenosyl-L-methionine = N(3)-methylpseudouridine(1915) in 23S rRNA + S-adenosyl-L-homocysteine + H(+). Specifically methylates the pseudouridine at position 1915 (m3Psi1915) in 23S rRNA. The chain is Ribosomal RNA large subunit methyltransferase H from Mesomycoplasma hyopneumoniae (strain 7448) (Mycoplasma hyopneumoniae).